Here is a 1835-residue protein sequence, read N- to C-terminus: AT-rich interactive domain-containing protein 2 (1835 aa).

Alanine 2 is modified (N-acetylalanine). Serine 4 is modified (phosphoserine). Glycyl lysine isopeptide (Lys-Gly) (interchain with G-Cter in SUMO2) cross-links involve residues lysine 7, lysine 15, and lysine 119. Positions 13–105 constitute an ARID domain; it reads RRKGLAFLDE…YLEKYEKVHH (93 aa). An LXXLL motif is present at residues 313–317; it reads LRFLL. Positions 524–603 form a DNA-binding region, RFX-type winged-helix; that stretch reads ACQWLNAHFE…IHVVGVKRRA (80 aa). Lysine 555 participates in a covalent cross-link: Glycyl lysine isopeptide (Lys-Gly) (interchain with G-Cter in SUMO2). Residues serine 631 and serine 635 each carry the phosphoserine modification. Threonine 653 bears the Phosphothreonine mark. At serine 689 the chain carries Phosphoserine. Threonine 692 bears the Phosphothreonine mark. 5 disordered regions span residues 819–844, 962–1057, 1266–1287, 1295–1314, and 1321–1341; these read QQLI…QSQD, LTGQ…SGES, MENP…KENE, NGRK…KIQS, and LISN…KQNS. 3 stretches are compositionally biased toward low complexity: residues 823–843, 985–996, and 1025–1044; these read TTSP…SQSQ, PTAMSSSSTPQS, and QVQV…QPQQ. Phosphoserine is present on serine 1300. Polar residues predominate over residues 1301-1314; that stretch reads DSSLPPSNSGKIQS. Serine 1391 and serine 1496 each carry phosphoserine. Disordered regions lie at residues 1488–1522 and 1572–1629; these read DSGS…AEDT and SAVQ…RKPG. The span at 1491–1509 shows a compositional bias: polar residues; the sequence is SKVSHSPALSSDVRSTNGT. Residues 1513 to 1522 show a composition bias toward basic and acidic residues; that stretch reads KTVKRPAEDT. Residues 1573 to 1592 are compositionally biased toward polar residues; the sequence is AVQQKQQHPPTYVQNVVPQN. Low complexity predominate over residues 1602-1623; sequence QVQGQPNSSQPSPFSGSSQPGD. Residues 1632–1657 form a C2H2-type zinc finger; the sequence is FMCLWQSCKKWFQTPSQVFYHAATEH. Residues lysine 1701, lysine 1716, and lysine 1731 each participate in a glycyl lysine isopeptide (Lys-Gly) (interchain with G-Cter in SUMO2) cross-link. The tract at residues 1703 to 1728 is disordered; that stretch reads DEPGQAGSQKSSTKQPTVGGTSSTPR. The segment covering 1708 to 1728 has biased composition (polar residues); it reads AGSQKSSTKQPTVGGTSSTPR.

As to quaternary structure, component of the SWI/SNF-B (PBAF) chromatin remodeling complex, at least composed of SMARCA4/BRG1, SMARCB1/BAF47/SNF5, ACTL6A/BAF53A or ACTL6B/BAF53B, SMARCE1/BAF57, SMARCD1/BAF60A, SMARCD2/BAF60B, perhaps SMARCD3/BAF60C, SMARCC1/BAF155, SMARCC2/BAF170, PBRM1/BAF180, ARID2/BAF200 and actin. Interacts with SRF. Forms complexes with SRF and SRF cofactors MYOCD, NKX2-5 and SRFBP1. In terms of tissue distribution, highly expressed in heart.

The protein resides in the nucleus. In terms of biological role, involved in transcriptional activation and repression of select genes by chromatin remodeling (alteration of DNA-nucleosome topology). Required for the stability of the SWI/SNF chromatin remodeling complex SWI/SNF-B (PBAF). May be involved in targeting the complex to different genes. May be involved in regulating transcriptional activation of cardiac genes. This chain is AT-rich interactive domain-containing protein 2, found in Homo sapiens (Human).